The primary structure comprises 786 residues: Receptor-like protein 30 (786 aa).

A signal peptide spans 1-30 (MIPSQSNSFSGSVITLYFFLLGSLVLRTLA). Topologically, residues 31 to 739 (SSRLHYCRHD…SEPEEQVINW (709 aa)) are extracellular. 4 N-linked (GlcNAc...) asparagine glycosylation sites follow: asparagine 67, asparagine 98, asparagine 115, and asparagine 133. LRR repeat units lie at residues 110–133 (LQQLQNLTLSDCHLYGEVTSSLGN), 134–158 (LSRLTHLDLSSNQLTGEVLASVSKL), 159–181 (NQLRDLLLSENSFSGNIPTSFTN), and 183–204 (TKLSSLDISSNQFTLENFSFIL). 3 N-linked (GlcNAc...) asparagine glycosylation sites follow: asparagine 181, asparagine 199, and asparagine 206. LRR repeat units lie at residues 207-231 (LTSLSSLNVASNHFKSTLPSDMSGL), 233-255 (NLKYFDVRENSFVGTFPTSLFTI), 257-279 (SLQIVYLEGNQFMGPIKFGNISS), 280-304 (SSRLWDLNLADNKFDGPIPEYISEI), 305-328 (HSLIVLDLSHNNLVGPIPTSISKL), 329-352 (VNLQHLSLSNNTLEGEVPGCLWGL), 354-375 (TVTLSHNSFNSFGKSSSGALDG), 376-399 (ESMQELDLGSNSLGGPFPHWICKQ), 400-423 (RFLKYLDLSNNLFNGSIPPCLKNS), 425-447 (YWLKGLVLRNNSFSGFLPDVFVN), 448-472 (ASMLLSLDVSYNRLEGKLPKSLINC), 474-496 (GMELLNVGSNIIKDTFPSWLVSL), 497-524 (PSLRVLILRSNAFYGSLYYDHISFGFQH), and 526-546 (RLIDISQNGFSGTLSPLYFSN). The N-linked (GlcNAc...) asparagine glycan is linked to asparagine 276. Asparagine 338 is a glycosylation site (N-linked (GlcNAc...) asparagine). 5 N-linked (GlcNAc...) asparagine glycosylation sites follow: asparagine 413, asparagine 422, asparagine 434, asparagine 447, and asparagine 471. Residue asparagine 558 is glycosylated (N-linked (GlcNAc...) asparagine). LRR repeat units follow at residues 596–621 (IPYFFRAIDFSGNRFFGNIPESVGLL), 622–645 (KELRLLNLSGNSFTSNIPQSLANL), 646–669 (TNLETLDLSRNQLSGHIPRDLGSL), and 671–694 (FLSTMNFSHNLLEGPVPLGTQFQS). N-linked (GlcNAc...) asparagine glycosylation is found at asparagine 628 and asparagine 644. Asparagine 676 carries an N-linked (GlcNAc...) asparagine glycan. A helical membrane pass occupies residues 740-760 (IAAAIAYGPGVFCGLVIGHIF). Topologically, residues 761–786 (FTAHKHEWFMEKFHRNKRRVVTTSAR) are cytoplasmic.

The protein belongs to the RLP family.

The protein resides in the cell membrane. Receptor for microbe-associated molecular patterns (MAMPs) that induces a BAK1-dependent basal immune response to necrotrophic fungi (e.g. S.sclerotiorum) in the presence of MAMPs (e.g. flg22 and SCLEROTINIA CULTURE FILTRATE ELICITOR1 (SCFE1) from the necrotrophic fungal pathogen S.sclerotiorum). Functionality seems to depend on the presence of the receptor kinase SOBIR1 as an adapter protein. Required for full non-host resistance to bacterial pathogens (e.g. P.syringae pv phaseolicola). This Arabidopsis thaliana (Mouse-ear cress) protein is Receptor-like protein 30.